The sequence spans 437 residues: Trigger factor (437 aa).

A PPIase FKBP-type domain is found at 161 to 246 (DDQVNIDFVG…VNSVSAPQLP (86 aa)).

The protein belongs to the FKBP-type PPIase family. Tig subfamily.

Its subcellular location is the cytoplasm. It carries out the reaction [protein]-peptidylproline (omega=180) = [protein]-peptidylproline (omega=0). Involved in protein export. Acts as a chaperone by maintaining the newly synthesized protein in an open conformation. Functions as a peptidyl-prolyl cis-trans isomerase. The sequence is that of Trigger factor from Pseudomonas putida (strain W619).